The chain runs to 185 residues: UPF0149 protein PD_0802 (185 aa).

Belongs to the UPF0149 family.

This Xylella fastidiosa (strain Temecula1 / ATCC 700964) protein is UPF0149 protein PD_0802.